The primary structure comprises 764 residues: Palmitoyltransferase AKR1 (764 aa).

Disordered stretches follow at residues 1–38 (MVNE…GDSN) and 51–71 (SGNE…AEED). The Cytoplasmic segment spans residues 1 to 321 (MVNELENVPR…IKKWFKKSQH (321 aa)). A compositionally biased stretch (polar residues) spans 10–27 (RASTLTNEEQTVDPSNND). Phosphoserine occurs at positions 51 and 57. 6 ANK repeats span residues 72–102 (PLLT…EVNN), 108–137 (EHIT…DVNA), 142–171 (LHAT…DPTM), 175–204 (QGFN…SKGL), 213–242 (KGRT…SIKI), and 246–275 (EGFT…DFFQ). Residues 322–341 (AKLVTFITPFLFLGIAFALF) form a helical membrane-spanning segment. Over 342 to 346 (SHINP) the chain is Lumenal. The chain crosses the membrane as a helical span at residues 347 to 364 (LFVIIVLFLLAIATNKGL). Topologically, residues 365-384 (NKFVLPSYGRMGVHNVTLLR) are cytoplasmic. Residues 385-405 (SPLLSGVFFGTLLWVTIVWFF) form a helical membrane-spanning segment. Over 406–418 (KVMPRTFSDEQYT) the chain is Lumenal. The chain crosses the membrane as a helical span at residues 419–439 (NILMLVILVSVFYLFGQLVIM). Topologically, residues 440–513 (DPGCLPEETD…FNDVGLKNHK (74 aa)) are cytoplasmic. In terms of domain architecture, DHHC spans 470–520 (NFCIETWIRKPLRSKFSPLNNAVVARFDHYCPWIFNDVGLKNHKAFIFFIT). The active-site S-palmitoyl cysteine intermediate is Cys-500. A helical transmembrane segment spans residues 514–534 (AFIFFITLMESGIFTFLALCL). Topologically, residues 535–570 (EYFDELEDAHEDTSQKNGKCFILGASDLCSGLIYDR) are lumenal. The helical transmembrane segment at 571 to 591 (FVFLILLWALLQSIWVASLIF) threads the bilayer. Over 592-764 (VQAFQICKGM…KDVEQGNDMV (173 aa)) the chain is Cytoplasmic.

Belongs to the DHHC palmitoyltransferase family. AKR/ZDHHC17 subfamily.

It localises to the early endosome membrane. The protein localises to the golgi apparatus membrane. It catalyses the reaction L-cysteinyl-[protein] + hexadecanoyl-CoA = S-hexadecanoyl-L-cysteinyl-[protein] + CoA. Functionally, palmitoyltransferase specific for casein kinase 1. Palmitoylates isoforms YCK1 and YCK2 at both C-terminal cysteine residues, which is required for their proper plasma membrane localization. Required for constitutive endocytosis of a-factor receptor STE3 and both constitutive and pheromone-induced endocytosis of alpha-factor receptor STE2. This is Palmitoyltransferase AKR1 (AKR1) from Saccharomyces cerevisiae (strain ATCC 204508 / S288c) (Baker's yeast).